Consider the following 188-residue polypeptide: Pyridoxal 5'-phosphate synthase subunit PdxT (188 aa).

47 to 49 serves as a coordination point for L-glutamine; the sequence is GES. Residue C79 is the Nucleophile of the active site. L-glutamine contacts are provided by residues R105 and 134–135; that span reads IR. Residues H170 and E172 each act as charge relay system in the active site.

Belongs to the glutaminase PdxT/SNO family. In the presence of PdxS, forms a dodecamer of heterodimers. Only shows activity in the heterodimer.

The enzyme catalyses aldehydo-D-ribose 5-phosphate + D-glyceraldehyde 3-phosphate + L-glutamine = pyridoxal 5'-phosphate + L-glutamate + phosphate + 3 H2O + H(+). It catalyses the reaction L-glutamine + H2O = L-glutamate + NH4(+). The protein operates within cofactor biosynthesis; pyridoxal 5'-phosphate biosynthesis. Catalyzes the hydrolysis of glutamine to glutamate and ammonia as part of the biosynthesis of pyridoxal 5'-phosphate. The resulting ammonia molecule is channeled to the active site of PdxS. The protein is Pyridoxal 5'-phosphate synthase subunit PdxT of Listeria monocytogenes serotype 4b (strain F2365).